We begin with the raw amino-acid sequence, 132 residues long: Small ribosomal subunit protein uS8 (132 aa).

It belongs to the universal ribosomal protein uS8 family. Part of the 30S ribosomal subunit. Contacts proteins S5 and S12.

One of the primary rRNA binding proteins, it binds directly to 16S rRNA central domain where it helps coordinate assembly of the platform of the 30S subunit. This is Small ribosomal subunit protein uS8 from Paenarthrobacter aurescens (strain TC1).